The primary structure comprises 41 residues: U-megalopygitoxin(4)-Mo5 (41 aa).

An N-terminal signal peptide occupies residues 1–23 (MKCSLLLVVFAAMVALFAAGTNA).

The protein belongs to the caterpillar 4 family. In terms of tissue distribution, expressed by the venom apparatus.

The protein localises to the secreted. In terms of biological role, probable toxin. The sequence is that of U-megalopygitoxin(4)-Mo5 from Megalopyge opercularis (Southern flannel moth).